A 617-amino-acid chain; its full sequence is Phosphomethylpyrimidine synthase (617 aa).

Substrate contacts are provided by residues Asn230, Met259, Tyr288, His324, 344 to 346 (SRG), 385 to 388 (DGLR), and Glu424. His428 is a Zn(2+) binding site. Position 451 (Tyr451) interacts with substrate. His492 contributes to the Zn(2+) binding site. Residues Cys572, Cys575, and Cys580 each coordinate [4Fe-4S] cluster.

It belongs to the ThiC family. In terms of assembly, homodimer. It depends on [4Fe-4S] cluster as a cofactor.

The catalysed reaction is 5-amino-1-(5-phospho-beta-D-ribosyl)imidazole + S-adenosyl-L-methionine = 4-amino-2-methyl-5-(phosphooxymethyl)pyrimidine + CO + 5'-deoxyadenosine + formate + L-methionine + 3 H(+). Its pathway is cofactor biosynthesis; thiamine diphosphate biosynthesis. In terms of biological role, catalyzes the synthesis of the hydroxymethylpyrimidine phosphate (HMP-P) moiety of thiamine from aminoimidazole ribotide (AIR) in a radical S-adenosyl-L-methionine (SAM)-dependent reaction. This Paracidovorax citrulli (strain AAC00-1) (Acidovorax citrulli) protein is Phosphomethylpyrimidine synthase.